The sequence spans 559 residues: MSKVPSDIEIAQAAKMKPVMELARGLGIQEDEVELYGKYKAKISLDVYRRLKDKPDGKLILVTAITPTPAGEGKTTTSVGLTDALARLGKRVMVCLREPSLGPSFGIKGGAAGGGYAQVVPMEDINLHFTGDIHAVTYAHNLLAAMVDNHLQQGNVLNIDPRTITWRRVIDLNDRALRNIVIGLGGKANGVPRETGFDISVASEVMACLCLASDLMDLKERFSRIVVGYTYDGKPVTAGDLEAQGSMALLMKDAIKPNLVQTLENTPAFIHGGPFANIAHGCNSIIATKTALKLADYVVTEAGFGADLGAEKFYDVKCRYAGFKPDATVIVATVRALKMHGGVPKSDLATENLEALREGFANLEKHIENIGKFGVPAVVAINAFPTDTEAELNLLYELCAKAGAEVALSEVWAKGGEGGLELARKVLQTLESRPSNFHVLYNLDLSIKDKIAKIATEIYGADGVNYTAEADKAIQRYESLGYGNLPVVMAKTQYSFSDDMTKLGRPRNFTITVREVRLSAGGRLIVPITGAIMTMPGLPKRPAACNIDIDADGVITGLF.

Residue 68–75 participates in ATP binding; sequence TPAGEGKT.

The protein belongs to the formate--tetrahydrofolate ligase family. As to quaternary structure, homotetramer.

It carries out the reaction (6S)-5,6,7,8-tetrahydrofolate + formate + ATP = (6R)-10-formyltetrahydrofolate + ADP + phosphate. The protein operates within one-carbon metabolism; tetrahydrofolate interconversion. This chain is Formate--tetrahydrofolate ligase, found in Moorella thermoacetica (Clostridium thermoaceticum).